A 133-amino-acid chain; its full sequence is Small ribosomal subunit protein uS8 (133 aa).

It belongs to the universal ribosomal protein uS8 family. In terms of assembly, part of the 30S ribosomal subunit. Contacts proteins S5 and S12.

In terms of biological role, one of the primary rRNA binding proteins, it binds directly to 16S rRNA central domain where it helps coordinate assembly of the platform of the 30S subunit. In Salinibacter ruber (strain DSM 13855 / M31), this protein is Small ribosomal subunit protein uS8.